The sequence spans 91 residues: Probable Fe(2+)-trafficking protein (91 aa).

The protein belongs to the Fe(2+)-trafficking protein family.

Its function is as follows. Could be a mediator in iron transactions between iron acquisition and iron-requiring processes, such as synthesis and/or repair of Fe-S clusters in biosynthetic enzymes. This is Probable Fe(2+)-trafficking protein from Actinobacillus pleuropneumoniae serotype 5b (strain L20).